A 262-amino-acid chain; its full sequence is Shikimate dehydrogenase (NADP(+)) (262 aa).

Residues 13-15 and Thr59 contribute to the shikimate site; that span reads SLS. Residue Lys63 is the Proton acceptor of the active site. Residue Asp75 participates in NADP(+) binding. Shikimate contacts are provided by Asn84 and Asp99. NADP(+) is bound by residues 122–126, 144–149, and Met205; these read GAGGA and NRTLEK. Tyr207 contributes to the shikimate binding site. Gly228 contacts NADP(+).

Belongs to the shikimate dehydrogenase family. Homodimer.

It carries out the reaction shikimate + NADP(+) = 3-dehydroshikimate + NADPH + H(+). The protein operates within metabolic intermediate biosynthesis; chorismate biosynthesis; chorismate from D-erythrose 4-phosphate and phosphoenolpyruvate: step 4/7. Functionally, involved in the biosynthesis of the chorismate, which leads to the biosynthesis of aromatic amino acids. Catalyzes the reversible NADPH linked reduction of 3-dehydroshikimate (DHSA) to yield shikimate (SA). The chain is Shikimate dehydrogenase (NADP(+)) from Ignicoccus hospitalis (strain KIN4/I / DSM 18386 / JCM 14125).